The following is a 324-amino-acid chain: MIDKNQTCGVGQDSVPYMICLIHILEEWFGVEQLEDYLNFANYLLWVFTPLILLILPYFTIFLLYLTIIFLHIYKRKNVLKEAYSHNLWDGARKTVATLWDGHAAVWHGYEVHGMEKIPEDGPALIIFYHGAIPIDFYYFMAKIFIHKGRTCRVVADHFVFKIPGFSLLLDVFCALHGPREKCVEILRSGHLLAISPGGVREALISDETYNIVWGHRRGFAQVAIDAKVPIIPMFTQNIREGFRSLGGTRLFRWLYEKFRYPFAPMYGGFPVKLRTYLGDPIPYDPQITAEELAEKTKNAVQALIDKHQRIPGNIMSALLERFH.

Residues 1–50 (MIDKNQTCGVGQDSVPYMICLIHILEEWFGVEQLEDYLNFANYLLWVFTP) are Lumenal-facing. Asn-5 is a glycosylation site (N-linked (GlcNAc...) asparagine). The chain crosses the membrane as a helical span at residues 51–71 (LILLILPYFTIFLLYLTIIFL). The Cytoplasmic portion of the chain corresponds to 72-125 (HIYKRKNVLKEAYSHNLWDGARKTVATLWDGHAAVWHGYEVHGMEKIPEDGPAL). A helical transmembrane segment spans residues 126–146 (IIFYHGAIPIDFYYFMAKIFI). His-130 is an active-site residue. At 147–324 (HKGRTCRVVA…IMSALLERFH (178 aa)) the chain is on the lumenal side.

It belongs to the diacylglycerol acyltransferase family. Highly divergent.

The protein localises to the endoplasmic reticulum membrane. The catalysed reaction is a 1,2-diacylglycerol + a 1,2-diacyl-sn-glycero-3-phosphocholine = a triacylglycerol + a 1-acyl-sn-glycero-3-phosphocholine. It carries out the reaction a 1-O-alkyl-2-acyl-sn-glycero-3-phosphocholine + a 1,2-diacylglycerol = a 1-O-alkyl-sn-glycero-3-phosphocholine + a triacylglycerol. It catalyses the reaction a 2-acylglycerol + an acyl-CoA = a 1,2-diacylglycerol + CoA. The enzyme catalyses an acyl-CoA + a 1,2-diacyl-sn-glycerol = a triacyl-sn-glycerol + CoA. The catalysed reaction is 2-(9Z-octadecenoyl)-glycerol + (9Z)-octadecenoyl-CoA = 1,2-di-(9Z-octadecenoyl)-glycerol + CoA. It carries out the reaction 1,2-di-(9Z-octadecenoyl)-sn-glycerol + (9Z)-octadecenoyl-CoA = 1,2,3-tri-(9Z-octadecenoyl)-glycerol + CoA. Its activity is regulated as follows. Acyltransferase activity is specifically inhibited by TMX1 at the endoplasmic reticulum, restricting accumulation of triacylglycerol. Catalytic subunit of the alternative triglyceride biosynthesis pathway, which mediates formation of triacylglycerol from diacylglycerol and membrane phospholipids. Synthesizes triacylglycerol at the expense of membrane phospholipids, such as phosphatidylcholine (PC) and its ether-linked form (ePC), thereby altering the composition of membranes. The alternative triglyceride biosynthesis pathway is probably required to provide the energy required for rapid growth when fuel sources are limiting. It maintains mitochondrial function during periods of extracellular lipid starvation. Can also use acyl-CoA as donor: acts as a acyl-CoA:monoacylglycerol acyltransferase (MGAT), but also shows acyl-CoA:diacylglycerol acyltransferase (DGAT) activity. This is DGAT1/2-independent enzyme synthesizing storage lipids from Homo sapiens (Human).